The chain runs to 478 residues: Zinc metalloproteinase/disintegrin (478 aa).

A signal peptide spans 1–20; that stretch reads MIQVLLVTICLAVFPYQGSS. A propeptide spanning residues 21–194 is cleaved from the precursor; it reads KTLKSGNVND…KASQLNLTPE (174 aa). Glutamine 195 carries the post-translational modification Pyrrolidone carboxylic acid. The Peptidase M12B domain maps to 201–397; that stretch reads RYIELVIVAD…RNPQCILNQP (197 aa). Residues glutamate 204 and aspartate 288 each contribute to the Ca(2+) site. 3 cysteine pairs are disulfide-bonded: cysteine 312–cysteine 392, cysteine 352–cysteine 376, and cysteine 354–cysteine 359. A Zn(2+)-binding site is contributed by histidine 337. Residue glutamate 338 is part of the active site. Zn(2+)-binding residues include histidine 341 and histidine 347. Residues cysteine 392 and asparagine 395 each contribute to the Ca(2+) site. Positions 398–413 are excised as a propeptide; the sequence is LRTDTVSTPVSGNELL. In terms of domain architecture, Disintegrin spans 405–478; sequence TPVSGNELLQ…SDCPRNPYKD (74 aa). Intrachain disulfides connect cysteine 420/cysteine 443, cysteine 434/cysteine 440, cysteine 439/cysteine 464, and cysteine 452/cysteine 471. The Cell attachment site; atypical (VGD) signature appears at 456 to 458; that stretch reads VGD.

It belongs to the venom metalloproteinase (M12B) family. P-II subfamily. P-IIe sub-subfamily. Monomer (metalloproteinase). Heterodimer; disulfide-linked (disintegrin). Zn(2+) is required as a cofactor. As to expression, expressed by the venom gland.

Its subcellular location is the secreted. With respect to regulation, fibrinolytic and caseinolytic activities are inhibited by Cd(2+), Cu(2+) and Co(2+) ions. Not inhibited by Mg(2+), Ca(2+) and Ba(2+). Also inhibited by EDTA, EGTA and 1,10-phenanthroline. Fibrinolytic and fibrinogenolytic metalloproteinase that hydrolyzes the Aalpha-chain and more slowly the Bbeta-chain of fibrin and fibrinogen. Its fibrinolytic activity is direct, without any plasminogen activation. Also hydrolyzes casein and B-chain of oxidized insulin. Inhibits ADP-induced and collagen-induced platelet aggregation. Shows low hemorrhagic activity. Cleaves the plasma proteinase inhibitors alpha(2)-macroglobulin (A2M) and pregnancy zone protein (PZP), and is inhibited by them. The metalloprotease has no strict P1-P1' specificity requirement. Hydrolysis at sites with a Pro residue at P1 is observed with bradykinin, substance P, PZP and alpha chain fibrinogen (FGA). In terms of biological role, poor inhibitor of platelet aggregation. The disintegrin inhibits the adhesion of the alpha-4/beta-1 (ITGA4/ITGB1) integrin to VCAM-1. Inhibition on alpha-2b/beta-3 (ITGA2B/ITGB3) is low. In Macrovipera lebetinus (Levantine viper), this protein is Zinc metalloproteinase/disintegrin.